Here is a 164-residue protein sequence, read N- to C-terminus: Ubiquitin-fold modifier-conjugating enzyme 1 (164 aa).

Cys-116 functions as the Glycyl thioester intermediate in the catalytic mechanism.

Belongs to the ubiquitin-conjugating enzyme family. UFC1 subfamily.

In terms of biological role, E2-like enzyme which forms an intermediate with UFM1 via a thioester linkage. This chain is Ubiquitin-fold modifier-conjugating enzyme 1, found in Drosophila persimilis (Fruit fly).